A 354-amino-acid polypeptide reads, in one-letter code: 3-dehydroquinate synthase (354 aa).

NAD(+) contacts are provided by residues 66–71 (SGETSK), 100–104 (GATGD), 124–125 (TT), Lys-136, Lys-145, and 163–166 (FLET). Residues Glu-178, His-242, and His-256 each coordinate Zn(2+).

This sequence belongs to the sugar phosphate cyclases superfamily. Dehydroquinate synthase family. Requires NAD(+) as cofactor. The cofactor is Co(2+). Zn(2+) serves as cofactor.

The protein resides in the cytoplasm. The catalysed reaction is 7-phospho-2-dehydro-3-deoxy-D-arabino-heptonate = 3-dehydroquinate + phosphate. Its pathway is metabolic intermediate biosynthesis; chorismate biosynthesis; chorismate from D-erythrose 4-phosphate and phosphoenolpyruvate: step 2/7. Its function is as follows. Catalyzes the conversion of 3-deoxy-D-arabino-heptulosonate 7-phosphate (DAHP) to dehydroquinate (DHQ). In Staphylococcus epidermidis (strain ATCC 35984 / DSM 28319 / BCRC 17069 / CCUG 31568 / BM 3577 / RP62A), this protein is 3-dehydroquinate synthase.